Here is a 165-residue protein sequence, read N- to C-terminus: Lipoprotein signal peptidase (165 aa).

The next 5 membrane-spanning stretches (helical) occupy residues 10–30 (LKWL…KYWV), 42–62 (VLPG…GLFT), 71–91 (LFVW…YKLI), 105–125 (IGGA…VDFI), and 133–153 (HWPT…IVTI). Residues Asp-123 and Asp-141 contribute to the active site.

Belongs to the peptidase A8 family.

It is found in the cell inner membrane. It carries out the reaction Release of signal peptides from bacterial membrane prolipoproteins. Hydrolyzes -Xaa-Yaa-Zaa-|-(S,diacylglyceryl)Cys-, in which Xaa is hydrophobic (preferably Leu), and Yaa (Ala or Ser) and Zaa (Gly or Ala) have small, neutral side chains.. Its pathway is protein modification; lipoprotein biosynthesis (signal peptide cleavage). Its function is as follows. This protein specifically catalyzes the removal of signal peptides from prolipoproteins. The sequence is that of Lipoprotein signal peptidase from Blochmanniella pennsylvanica (strain BPEN).